Reading from the N-terminus, the 419-residue chain is MIIKNGMIIYGDEFTIVRSDVLIEDGVIKEVGKNIRAPADMVIDASSHLVIPGLINAHTHVSMVLLRGLAEDVPLQEWLQNYIWPRERELKRKDIYWGTLLGLVEMARSGVTTFVDMYFHIEEVAKATIEVGLRGFLGYGMVDLENREKLEVEIKETEKFYEYVTKINSPLVNFVLAPHAPYTCSLECLKWVSKKANQWNVPVTIHLSETKKEVEEIRKKYGMTPTQLLDEVGLLNEKLIAAHGVWLSEEELRMLSSANATVVHCPASNMKLGSGVFPLRKALDLGVNVALGTDGAASNNTLDMLREMRLASLLQKVAHLNPAIVKSEEILKMATVNPAKALGLKSGVIKEGYIADLALINLRRPHLLPLNSPTSLLIYSARGGDVDTLFVNGEIVILDGEFLTVNEEKILDKFLKVIE.

Zn(2+) is bound by residues H58 and H60. Residues E87 and H179 each contribute to the substrate site. H206 contributes to the Zn(2+) binding site. Positions 209 and 294 each coordinate substrate. A Zn(2+)-binding site is contributed by D294.

Belongs to the metallo-dependent hydrolases superfamily. MTA/SAH deaminase family. Requires Zn(2+) as cofactor.

The catalysed reaction is S-adenosyl-L-homocysteine + H2O + H(+) = S-inosyl-L-homocysteine + NH4(+). It carries out the reaction S-methyl-5'-thioadenosine + H2O + H(+) = S-methyl-5'-thioinosine + NH4(+). In terms of biological role, catalyzes the deamination of 5-methylthioadenosine and S-adenosyl-L-homocysteine into 5-methylthioinosine and S-inosyl-L-homocysteine, respectively. Is also able to deaminate adenosine. This is 5-methylthioadenosine/S-adenosylhomocysteine deaminase from Pyrococcus furiosus (strain ATCC 43587 / DSM 3638 / JCM 8422 / Vc1).